A 362-amino-acid chain; its full sequence is Endolytic peptidoglycan transglycosylase RlpA (362 aa).

A signal peptide spans Met-1–Ala-17. Cys-18 carries N-palmitoyl cysteine lipidation. Residue Cys-18 is the site of S-diacylglycerol cysteine attachment. A disordered region spans residues Pro-198–Ala-276. Positions Pro-262–Ala-276 are enriched in low complexity. The SPOR domain maps to Gln-285–Ala-361.

It belongs to the RlpA family.

The protein resides in the cell membrane. Functionally, lytic transglycosylase with a strong preference for naked glycan strands that lack stem peptides. This chain is Endolytic peptidoglycan transglycosylase RlpA, found in Escherichia coli O157:H7.